The chain runs to 422 residues: 5'-deoxyadenosine deaminase (422 aa).

Positions 57 and 59 each coordinate Zn(2+). Substrate contacts are provided by glutamate 86 and histidine 178. Histidine 205 contributes to the Zn(2+) binding site. Substrate-binding residues include glutamate 208 and aspartate 294. Aspartate 294 is a binding site for Zn(2+).

It belongs to the metallo-dependent hydrolases superfamily. MTA/SAH deaminase family. As to quaternary structure, homotetramer. It depends on Zn(2+) as a cofactor.

The enzyme catalyses 5'-deoxyadenosine + H2O + H(+) = 5'-deoxyinosine + NH4(+). It catalyses the reaction S-adenosyl-L-homocysteine + H2O + H(+) = S-inosyl-L-homocysteine + NH4(+). The catalysed reaction is S-methyl-5'-thioadenosine + H2O + H(+) = S-methyl-5'-thioinosine + NH4(+). It carries out the reaction adenosine + H2O + H(+) = inosine + NH4(+). Its pathway is amino-acid biosynthesis; S-adenosyl-L-methionine biosynthesis. In terms of biological role, catalyzes the deamination of three SAM-derived enzymatic products, namely 5'-deoxyadenosine, S-adenosyl-L-homocysteine, and 5'-methylthioadenosine, to produce the inosine analogs. Can also deaminate adenosine. The preferred substrate for this enzyme is 5'-deoxyadenosine, but all these substrates are efficiently deaminated. Likely functions in a S-adenosyl-L-methionine (SAM) recycling pathway from S-adenosyl-L-homocysteine (SAH) produced from SAM-dependent methylation reactions. May also be involved in the recycling of 5'-deoxyadenosine, whereupon the 5'-deoxyribose moiety of 5'-deoxyinosine is further metabolized to deoxyhexoses used for the biosynthesis of aromatic amino acids in methanogens. The protein is 5'-deoxyadenosine deaminase of Methanococcus maripaludis (strain DSM 14266 / JCM 13030 / NBRC 101832 / S2 / LL).